A 117-amino-acid polypeptide reads, in one-letter code: UPF0102 protein RHOS4_03930 (117 aa).

The protein belongs to the UPF0102 family.

This chain is UPF0102 protein RHOS4_03930, found in Cereibacter sphaeroides (strain ATCC 17023 / DSM 158 / JCM 6121 / CCUG 31486 / LMG 2827 / NBRC 12203 / NCIMB 8253 / ATH 2.4.1.) (Rhodobacter sphaeroides).